A 437-amino-acid polypeptide reads, in one-letter code: tRNA-2-methylthio-N(6)-dimethylallyladenosine synthase (437 aa).

Residues 1–115 (MKVYIETMGC…ISQVIHKEKA (115 aa)) form the MTTase N-terminal domain. [4Fe-4S] cluster is bound by residues C10, C46, C78, C148, C152, and C155. In terms of domain architecture, Radical SAM core spans 134-367 (KKAQIRSLLN…QNRHKEILEE (234 aa)). The TRAM domain occupies 370–436 (KLEVGKTHVV…KGRLIAAIKG (67 aa)).

It belongs to the methylthiotransferase family. MiaB subfamily. As to quaternary structure, monomer. [4Fe-4S] cluster serves as cofactor.

It localises to the cytoplasm. The enzyme catalyses N(6)-dimethylallyladenosine(37) in tRNA + (sulfur carrier)-SH + AH2 + 2 S-adenosyl-L-methionine = 2-methylsulfanyl-N(6)-dimethylallyladenosine(37) in tRNA + (sulfur carrier)-H + 5'-deoxyadenosine + L-methionine + A + S-adenosyl-L-homocysteine + 2 H(+). Catalyzes the methylthiolation of N6-(dimethylallyl)adenosine (i(6)A), leading to the formation of 2-methylthio-N6-(dimethylallyl)adenosine (ms(2)i(6)A) at position 37 in tRNAs that read codons beginning with uridine. The chain is tRNA-2-methylthio-N(6)-dimethylallyladenosine synthase from Helicobacter pylori (strain P12).